Reading from the N-terminus, the 438-residue chain is Serine carboxypeptidase-like 5 (438 aa).

Positions Met1 to Ser28 are cleaved as a signal peptide. Cystine bridges form between Cys87–Cys328, Cys251–Cys263, and Cys287–Cys294. The N-linked (GlcNAc...) asparagine glycan is linked to Asn108. Ser183 is a catalytic residue. The N-linked (GlcNAc...) asparagine glycan is linked to Asn347. Residue Asp363 is part of the active site. Asn379 carries N-linked (GlcNAc...) asparagine glycosylation. Residue His416 is part of the active site.

This sequence belongs to the peptidase S10 family. As to expression, expressed in seedlings, roots, and siliques.

It is found in the secreted. Its function is as follows. Probable carboxypeptidase. This Arabidopsis thaliana (Mouse-ear cress) protein is Serine carboxypeptidase-like 5 (SCPL5).